Here is a 443-residue protein sequence, read N- to C-terminus: ATP-dependent protease ATPase subunit HslU (443 aa).

Residues Ile18, Gly60–Glu65, Asp256, Glu321, and Arg393 each bind ATP.

The protein belongs to the ClpX chaperone family. HslU subfamily. As to quaternary structure, a double ring-shaped homohexamer of HslV is capped on each side by a ring-shaped HslU homohexamer. The assembly of the HslU/HslV complex is dependent on binding of ATP.

The protein resides in the cytoplasm. ATPase subunit of a proteasome-like degradation complex; this subunit has chaperone activity. The binding of ATP and its subsequent hydrolysis by HslU are essential for unfolding of protein substrates subsequently hydrolyzed by HslV. HslU recognizes the N-terminal part of its protein substrates and unfolds these before they are guided to HslV for hydrolysis. The protein is ATP-dependent protease ATPase subunit HslU of Enterobacter sp. (strain 638).